Here is a 519-residue protein sequence, read N- to C-terminus: Cytochrome P450 72C1 (519 aa).

The helical transmembrane segment at V10–V30 threads the bilayer. A heme-binding site is contributed by C467.

The protein belongs to the cytochrome P450 family. Requires heme as cofactor. As to expression, expressed in hypocotyls, roots, cotyledons, stamens and silique junctions.

It localises to the membrane. Its function is as follows. Atypical cytochrome P450 involved in brassinosteroids (BRs) inactivation and regulation of BRs homeostasis. Does not possess carbon 26 hydroxylase activity and may inactivate BRs by hydroxylation of carbons other than C-26. Acts in association with CYP734A1 to inactivate BRs and modulate photomorphogenesis. This is Cytochrome P450 72C1 (CYP72C1) from Arabidopsis thaliana (Mouse-ear cress).